Reading from the N-terminus, the 217-residue chain is Large ribosomal subunit protein uL3 (217 aa).

It belongs to the universal ribosomal protein uL3 family. As to quaternary structure, part of the 50S ribosomal subunit. Forms a cluster with proteins L14 and L19.

In terms of biological role, one of the primary rRNA binding proteins, it binds directly near the 3'-end of the 23S rRNA, where it nucleates assembly of the 50S subunit. In Mycobacterium bovis (strain ATCC BAA-935 / AF2122/97), this protein is Large ribosomal subunit protein uL3.